Here is a 415-residue protein sequence, read N- to C-terminus: Serine hydroxymethyltransferase (415 aa).

Residues Leu-117 and 121–123 each bind (6S)-5,6,7,8-tetrahydrofolate; that span reads GHL. N6-(pyridoxal phosphate)lysine is present on Lys-226. Residues Glu-241 and 349–351 contribute to the (6S)-5,6,7,8-tetrahydrofolate site; that span reads SPF.

The protein belongs to the SHMT family. As to quaternary structure, homodimer. It depends on pyridoxal 5'-phosphate as a cofactor.

It is found in the cytoplasm. It carries out the reaction (6R)-5,10-methylene-5,6,7,8-tetrahydrofolate + glycine + H2O = (6S)-5,6,7,8-tetrahydrofolate + L-serine. It participates in one-carbon metabolism; tetrahydrofolate interconversion. Its pathway is amino-acid biosynthesis; glycine biosynthesis; glycine from L-serine: step 1/1. Catalyzes the reversible interconversion of serine and glycine with tetrahydrofolate (THF) serving as the one-carbon carrier. This reaction serves as the major source of one-carbon groups required for the biosynthesis of purines, thymidylate, methionine, and other important biomolecules. Also exhibits THF-independent aldolase activity toward beta-hydroxyamino acids, producing glycine and aldehydes, via a retro-aldol mechanism. This Geobacter sulfurreducens (strain ATCC 51573 / DSM 12127 / PCA) protein is Serine hydroxymethyltransferase.